The chain runs to 361 residues: tRNA/tmRNA (uracil-C(5))-methyltransferase (361 aa).

S-adenosyl-L-methionine-binding residues include Gln-183, Tyr-211, Asn-216, Glu-232, and Asp-294. Cys-319 functions as the Nucleophile in the catalytic mechanism. Glu-353 functions as the Proton acceptor in the catalytic mechanism.

Belongs to the class I-like SAM-binding methyltransferase superfamily. RNA M5U methyltransferase family. TrmA subfamily.

It catalyses the reaction uridine(54) in tRNA + S-adenosyl-L-methionine = 5-methyluridine(54) in tRNA + S-adenosyl-L-homocysteine + H(+). The catalysed reaction is uridine(341) in tmRNA + S-adenosyl-L-methionine = 5-methyluridine(341) in tmRNA + S-adenosyl-L-homocysteine + H(+). Its function is as follows. Dual-specificity methyltransferase that catalyzes the formation of 5-methyluridine at position 54 (m5U54) in all tRNAs, and that of position 341 (m5U341) in tmRNA (transfer-mRNA). This is tRNA/tmRNA (uracil-C(5))-methyltransferase from Acinetobacter baumannii (strain ACICU).